The sequence spans 626 residues: Chaperone protein HtpG (626 aa).

Residues methionine 1–arginine 329 are a; substrate-binding. The interval glutamate 330–lysine 549 is b. The interval leucine 550–isoleucine 626 is c.

The protein belongs to the heat shock protein 90 family. As to quaternary structure, homodimer.

It is found in the cytoplasm. Molecular chaperone. Has ATPase activity. This chain is Chaperone protein HtpG, found in Rhodospirillum rubrum (strain ATCC 11170 / ATH 1.1.1 / DSM 467 / LMG 4362 / NCIMB 8255 / S1).